A 49-amino-acid chain; its full sequence is Large ribosomal subunit protein bL33A (49 aa).

It belongs to the bacterial ribosomal protein bL33 family.

In Levilactobacillus brevis (strain ATCC 367 / BCRC 12310 / CIP 105137 / JCM 1170 / LMG 11437 / NCIMB 947 / NCTC 947) (Lactobacillus brevis), this protein is Large ribosomal subunit protein bL33A.